The primary structure comprises 91 residues: Small ribosomal subunit protein uS19 (91 aa).

The protein belongs to the universal ribosomal protein uS19 family.

Functionally, protein S19 forms a complex with S13 that binds strongly to the 16S ribosomal RNA. This is Small ribosomal subunit protein uS19 from Prochlorococcus marinus (strain MIT 9303).